Consider the following 281-residue polypeptide: NADPH-dependent 7-cyano-7-deazaguanine reductase (281 aa).

87–89 (IES) is a binding site for substrate. 89–90 (SK) lines the NADPH pocket. The active-site Thioimide intermediate is the Cys-188. Asp-195 functions as the Proton donor in the catalytic mechanism. 227–228 (HE) serves as a coordination point for substrate. 256–257 (RG) serves as a coordination point for NADPH.

This sequence belongs to the GTP cyclohydrolase I family. QueF type 2 subfamily. As to quaternary structure, homodimer.

Its subcellular location is the cytoplasm. It catalyses the reaction 7-aminomethyl-7-carbaguanine + 2 NADP(+) = 7-cyano-7-deazaguanine + 2 NADPH + 3 H(+). The protein operates within tRNA modification; tRNA-queuosine biosynthesis. Its function is as follows. Catalyzes the NADPH-dependent reduction of 7-cyano-7-deazaguanine (preQ0) to 7-aminomethyl-7-deazaguanine (preQ1). The protein is NADPH-dependent 7-cyano-7-deazaguanine reductase of Photobacterium profundum (strain SS9).